A 134-amino-acid chain; its full sequence is Profilin-3 (134 aa).

A disulfide bond links Cys13 and Cys118. Positions 84 to 100 (AVIRGKKGSGGITIKKT) match the Involved in PIP2 interaction motif. The residue at position 114 (Thr114) is a Phosphothreonine.

It belongs to the profilin family. In terms of assembly, occurs in many kinds of cells as a complex with monomeric actin in a 1:1 ratio. Post-translationally, phosphorylated by MAP kinases.

Its subcellular location is the cytoplasm. The protein localises to the cytoskeleton. Functionally, binds to actin and affects the structure of the cytoskeleton. At high concentrations, profilin prevents the polymerization of actin, whereas it enhances it at low concentrations. The protein is Profilin-3 of Olea europaea (Common olive).